The following is a 20-amino-acid chain: Dahlein-5.3 (20 aa).

Expressed by the skin dorsal glands.

The protein resides in the secreted. Its function is as follows. Has no antimicrobial activity. Strongly inhibits the formation of NO by neuronal nitric oxide synthase at micromolar concentrations. The protein is Dahlein-5.3 of Ranoidea dahlii (Dahl's aquatic frog).